Reading from the N-terminus, the 116-residue chain is Hydrogenase maturation factor HypA (116 aa).

A Ni(2+)-binding site is contributed by His2. Zn(2+)-binding residues include Cys73, Cys76, Cys90, and Cys93.

The protein belongs to the HypA/HybF family.

In terms of biological role, involved in the maturation of [NiFe] hydrogenases. Required for nickel insertion into the metal center of the hydrogenase. In Escherichia coli O157:H7, this protein is Hydrogenase maturation factor HypA.